The primary structure comprises 638 residues: UvrABC system protein C (638 aa).

One can recognise a GIY-YIG domain in the interval 20–97; sequence ECAGVYQMFD…IKKFQPKFNI (78 aa). Positions 209 to 244 constitute a UVR domain; sequence KELQENLSKKMEELSSHMYFEEAAEIRDRIKALSYV.

It belongs to the UvrC family. Interacts with UvrB in an incision complex.

The protein localises to the cytoplasm. In terms of biological role, the UvrABC repair system catalyzes the recognition and processing of DNA lesions. UvrC both incises the 5' and 3' sides of the lesion. The N-terminal half is responsible for the 3' incision and the C-terminal half is responsible for the 5' incision. The polypeptide is UvrABC system protein C (Rickettsia canadensis (strain McKiel)).